A 340-amino-acid chain; its full sequence is N-acetyl-gamma-glutamyl-phosphate reductase (340 aa).

C147 is a catalytic residue.

Belongs to the NAGSA dehydrogenase family. Type 1 subfamily.

Its subcellular location is the cytoplasm. The enzyme catalyses N-acetyl-L-glutamate 5-semialdehyde + phosphate + NADP(+) = N-acetyl-L-glutamyl 5-phosphate + NADPH + H(+). It participates in amino-acid biosynthesis; L-arginine biosynthesis; N(2)-acetyl-L-ornithine from L-glutamate: step 3/4. Functionally, catalyzes the NADPH-dependent reduction of N-acetyl-5-glutamyl phosphate to yield N-acetyl-L-glutamate 5-semialdehyde. The protein is N-acetyl-gamma-glutamyl-phosphate reductase of Lactococcus lactis subsp. lactis (strain IL1403) (Streptococcus lactis).